We begin with the raw amino-acid sequence, 177 residues long: Large ribosomal subunit protein uL6 (177 aa).

Lys44 carries the N6-acetyllysine modification.

This sequence belongs to the universal ribosomal protein uL6 family. As to quaternary structure, part of the 50S ribosomal subunit.

This protein binds to the 23S rRNA, and is important in its secondary structure. It is located near the subunit interface in the base of the L7/L12 stalk, and near the tRNA binding site of the peptidyltransferase center. The protein is Large ribosomal subunit protein uL6 of Escherichia coli O139:H28 (strain E24377A / ETEC).